The chain runs to 220 residues: Probable chemoreceptor glutamine deamidase CheD (220 aa).

Belongs to the CheD family.

It catalyses the reaction L-glutaminyl-[protein] + H2O = L-glutamyl-[protein] + NH4(+). In terms of biological role, probably deamidates glutamine residues to glutamate on methyl-accepting chemotaxis receptors (MCPs), playing an important role in chemotaxis. This is Probable chemoreceptor glutamine deamidase CheD from Cupriavidus metallidurans (strain ATCC 43123 / DSM 2839 / NBRC 102507 / CH34) (Ralstonia metallidurans).